The sequence spans 340 residues: Phospho-N-acetylmuramoyl-pentapeptide-transferase (340 aa).

Helical transmembrane passes span phenylalanine 5–asparagine 25, threonine 50–threonine 70, serine 73–isoleucine 93, phenylalanine 113–aspartate 133, isoleucine 147–serine 167, glycine 178–serine 198, leucine 218–tyrosine 238, isoleucine 242–leucine 262, isoleucine 267–valine 287, and isoleucine 318–valine 338.

Belongs to the glycosyltransferase 4 family. MraY subfamily. The cofactor is Mg(2+).

The protein resides in the cell membrane. It carries out the reaction UDP-N-acetyl-alpha-D-muramoyl-L-alanyl-gamma-D-glutamyl-meso-2,6-diaminopimeloyl-D-alanyl-D-alanine + di-trans,octa-cis-undecaprenyl phosphate = di-trans,octa-cis-undecaprenyl diphospho-N-acetyl-alpha-D-muramoyl-L-alanyl-D-glutamyl-meso-2,6-diaminopimeloyl-D-alanyl-D-alanine + UMP. Its pathway is cell wall biogenesis; peptidoglycan biosynthesis. In terms of biological role, catalyzes the initial step of the lipid cycle reactions in the biosynthesis of the cell wall peptidoglycan: transfers peptidoglycan precursor phospho-MurNAc-pentapeptide from UDP-MurNAc-pentapeptide onto the lipid carrier undecaprenyl phosphate, yielding undecaprenyl-pyrophosphoryl-MurNAc-pentapeptide, known as lipid I. This is Phospho-N-acetylmuramoyl-pentapeptide-transferase from Buchnera aphidicola subsp. Baizongia pistaciae (strain Bp).